The following is a 437-amino-acid chain: GTPase Obg (437 aa).

An Obg domain is found at 2–160; it reads SMFLDTAKIK…RNLELELKVL (159 aa). The 178-residue stretch at 161–338 folds into the OBG-type G domain; sequence ADVGLVGFPS…LLEATAELLE (178 aa). GTP is bound by residues 167–174, 192–196, 214–217, 284–287, and 319–321; these read GFPSVGKS, FTTIV, DLPG, NKMD, and SGI. 2 residues coordinate Mg(2+): Ser-174 and Thr-194. The OCT domain occupies 359 to 437; that stretch reads GFNPDEPEFA…IGKFEFEFVD (79 aa).

It belongs to the TRAFAC class OBG-HflX-like GTPase superfamily. OBG GTPase family. In terms of assembly, monomer. Mg(2+) is required as a cofactor.

The protein resides in the cytoplasm. In terms of biological role, an essential GTPase which binds GTP, GDP and possibly (p)ppGpp with moderate affinity, with high nucleotide exchange rates and a fairly low GTP hydrolysis rate. Plays a role in control of the cell cycle, stress response, ribosome biogenesis and in those bacteria that undergo differentiation, in morphogenesis control. The sequence is that of GTPase Obg from Streptococcus suis (strain 98HAH33).